We begin with the raw amino-acid sequence, 809 residues long: Cell division control protein 48 homolog A (809 aa).

Ser2 bears the N-acetylserine mark. Ser41 carries the post-translational modification Phosphoserine. ADP contacts are provided by residues Gly210, 248–256 (GPPGSGKTL), and His387. 521-529 (GPPGCGKTL) lines the ATP pocket. The disordered stretch occupies residues 782-809 (AGSGATTGVADPFATSAAAAGDDDDLYN). The segment covering 791–801 (ADPFATSAAAA) has biased composition (low complexity).

The protein belongs to the AAA ATPase family. Homohexamer. Interacts with SERK1, GRF6, KAPP and SYP31, but not with KNOLLE. Component of the SERK1 signaling complex, composed of KAPP, CDC48A, GRF6 or GRF7, SERK1, SERK2, SERK3/BAK1 and BRI1. Interacts with PUX1, PUX2, PUX3, PUX4, PUX5, PUX7 and PUX11 via its N-terminus. In terms of processing, phosphorylated on at least one threonine residue and on Ser-41 by SERK1.

Its subcellular location is the nucleus. It localises to the cytoplasm. The protein localises to the cytoskeleton. It is found in the phragmoplast. The protein resides in the cell membrane. Functionally, probably functions in cell division and growth processes. Interacts with certain SNAREs as part of specialized membrane fusion events where vesicles from the same organelle fuse (homotypic fusion). This Arabidopsis thaliana (Mouse-ear cress) protein is Cell division control protein 48 homolog A (CDC48A).